Consider the following 228-residue polypeptide: Probable septum site-determining protein MinC (228 aa).

Belongs to the MinC family. As to quaternary structure, interacts with MinD and FtsZ.

Its function is as follows. Cell division inhibitor that blocks the formation of polar Z ring septums. Rapidly oscillates between the poles of the cell to destabilize FtsZ filaments that have formed before they mature into polar Z rings. Prevents FtsZ polymerization. This chain is Probable septum site-determining protein MinC, found in Yersinia pseudotuberculosis serotype O:1b (strain IP 31758).